A 105-amino-acid chain; its full sequence is Large ribosomal subunit protein uL24 (105 aa).

It belongs to the universal ribosomal protein uL24 family. In terms of assembly, part of the 50S ribosomal subunit.

Functionally, one of two assembly initiator proteins, it binds directly to the 5'-end of the 23S rRNA, where it nucleates assembly of the 50S subunit. In terms of biological role, one of the proteins that surrounds the polypeptide exit tunnel on the outside of the subunit. The protein is Large ribosomal subunit protein uL24 of Staphylococcus aureus (strain Mu3 / ATCC 700698).